We begin with the raw amino-acid sequence, 415 residues long: Serine--tRNA ligase (415 aa).

231–233 (TAE) is a binding site for L-serine. 262-264 (RSE) provides a ligand contact to ATP. Glutamate 285 is a binding site for L-serine. An ATP-binding site is contributed by 349-352 (EISS). Serine 383 contributes to the L-serine binding site.

The protein belongs to the class-II aminoacyl-tRNA synthetase family. Type-1 seryl-tRNA synthetase subfamily. In terms of assembly, homodimer. The tRNA molecule binds across the dimer.

It localises to the cytoplasm. It catalyses the reaction tRNA(Ser) + L-serine + ATP = L-seryl-tRNA(Ser) + AMP + diphosphate + H(+). The enzyme catalyses tRNA(Sec) + L-serine + ATP = L-seryl-tRNA(Sec) + AMP + diphosphate + H(+). The protein operates within aminoacyl-tRNA biosynthesis; selenocysteinyl-tRNA(Sec) biosynthesis; L-seryl-tRNA(Sec) from L-serine and tRNA(Sec): step 1/1. Catalyzes the attachment of serine to tRNA(Ser). Is also able to aminoacylate tRNA(Sec) with serine, to form the misacylated tRNA L-seryl-tRNA(Sec), which will be further converted into selenocysteinyl-tRNA(Sec). The polypeptide is Serine--tRNA ligase (Helicobacter pylori (strain P12)).